A 249-amino-acid chain; its full sequence is PF03932 family protein CutC (249 aa).

This sequence belongs to the CutC family.

The protein resides in the cytoplasm. The polypeptide is PF03932 family protein CutC (Bacteroides thetaiotaomicron (strain ATCC 29148 / DSM 2079 / JCM 5827 / CCUG 10774 / NCTC 10582 / VPI-5482 / E50)).